Reading from the N-terminus, the 131-residue chain is Methylglyoxal synthase (131 aa).

The MGS-like domain occupies 1-131; it reads MKIALIAHDK…GDLDYRKLRK (131 aa). Residues His8, Lys12, 34–37, and 54–55 each bind substrate; these read TGTT and SG. The active-site Proton donor/acceptor is the Asp60. His87 lines the substrate pocket.

The protein belongs to the methylglyoxal synthase family.

The catalysed reaction is dihydroxyacetone phosphate = methylglyoxal + phosphate. Its function is as follows. Catalyzes the formation of methylglyoxal from dihydroxyacetone phosphate. The chain is Methylglyoxal synthase from Bacillus anthracis (strain A0248).